We begin with the raw amino-acid sequence, 165 residues long: MKNIILGGGCFWCIEAVFERLKGVINTEVGYSGGKPNPSYESVCNGDGNIEVVKINYDEKQISLLEILILFFKIHDPTSIDKQGEDIGIQYRSIIFYENEEDKILAQNFIEEQQKIFSKKIVTKISRLQTYYKAENYHQHYFINNPDQGYCQAVIAPKLQKIQSD.

The active site involves Cys-10.

The protein belongs to the MsrA Met sulfoxide reductase family.

It carries out the reaction L-methionyl-[protein] + [thioredoxin]-disulfide + H2O = L-methionyl-(S)-S-oxide-[protein] + [thioredoxin]-dithiol. The catalysed reaction is [thioredoxin]-disulfide + L-methionine + H2O = L-methionine (S)-S-oxide + [thioredoxin]-dithiol. Has an important function as a repair enzyme for proteins that have been inactivated by oxidation. Catalyzes the reversible oxidation-reduction of methionine sulfoxide in proteins to methionine. The protein is Peptide methionine sulfoxide reductase MsrA of Campylobacter jejuni (strain RM1221).